The sequence spans 407 residues: TOM1-like protein 1 (407 aa).

The residue at position 2 (Gly2) is an N-acetylglycine. Residues 55-183 (ATTENLEEPD…SLKARGIRFP (129 aa)) form the VHS domain. The GAT domain maps to 228–315 (FTAEQTKEAF…TLSKYEEMNK (88 aa)). Positions 315–407 (KPSAPLTSHE…SSKNDDLIRF (93 aa)) are disordered. Ser337 carries the post-translational modification Phosphoserine. Basic and acidic residues predominate over residues 337-347 (SPIHGREESLV). Residues 353-364 (VRGGFHGGGGSG) show a composition bias toward gly residues. The segment covering 388-407 (PDHDPKKEQSSSKNDDLIRF) has biased composition (basic and acidic residues).

The protein belongs to the TOM1 family. As to expression, ubiquitously expressed.

The protein resides in the membrane. Might contribute to the loading of the ESCRT machinery. The chain is TOM1-like protein 1 from Arabidopsis thaliana (Mouse-ear cress).